The primary structure comprises 83 residues: MDLSFMAAQLPMMGGAFMDSPNEDFSTEYSLFNSSANVHAAANGQGQPEDPPRSSNDAVLLWIAIIATLGNIVVVGVVYAFTF.

Residues 58–78 (AVLLWIAIIATLGNIVVVGVV) form a helical membrane-spanning segment.

The protein resides in the membrane. This is an uncharacterized protein from Homo sapiens (Human).